Here is a 328-residue protein sequence, read N- to C-terminus: MFIIKSMLYRLMQMIVVLFVISTLTFILMKLSPGNPVDKILHLDVAQVSTEQINATKDKLGLNDSLLVQWWHWMNHLLHFNLGKSFESKEPVTQILFNYAPITLLISFSTLVVSLCISIPLGIIAAKRFHKWTDKVIRVISTLSISLPAFFIGIILLFIVTNLMNIDSVILSQFILPVITLSLGMCAYIIRLVRSNLLMLLQSNIVQASRLRGMNERYILIHDLLKPTILPIIPLLGISLGSLIGGTVVIENLFDIPGIGYLLMDSIKSRDYPVIQGCVLFIGFFVVIINTIADLLTLLLDPKQRLQLGNPKNKTNTPLISESSDRHA.

A run of 6 helical transmembrane segments spans residues 11–31 (LMQM…LMKL), 104–124 (LLIS…LGII), 139–159 (VIST…LLFI), 170–190 (ILSQ…AYII), 229–249 (ILPI…GTVV), and 279–299 (VLFI…LTLL). The 198-residue stretch at 100–297 (APITLLISFS…IINTIADLLT (198 aa)) folds into the ABC transmembrane type-1 domain.

Belongs to the binding-protein-dependent transport system permease family. OppBC subfamily. In terms of assembly, the complex is composed of two ATP-binding proteins (NikD and NikE), two transmembrane proteins (NikB and NikC) and a solute-binding protein (NikA).

The protein localises to the cell membrane. Its function is as follows. Part of the ABC transporter complex NikABCDE (Opp2) involved in nickel import. Probably responsible for the translocation of the substrate across the membrane. The polypeptide is Nickel import system permease protein NikB (Staphylococcus aureus (strain Mu50 / ATCC 700699)).